The following is a 547-amino-acid chain: Intercellular adhesion molecule 3 (547 aa).

A signal peptide spans 1-29; sequence MATMVPSVLWPRACWTLLVCCLLTPGVQG. Over 30–485 the chain is Extracellular; it reads QEFLLRVEPQ…VMDIEAGSSH (456 aa). Positions 46-103 constitute an Ig-like C2-type 1 domain; that stretch reads GGSLFVNCSTDCPSSEKIALETSLSKELVASGMGWAAFNLSNVTGNSRILCSVYCNGS. N-linked (GlcNAc...) asparagine glycosylation is found at asparagine 52, asparagine 84, asparagine 87, asparagine 101, asparagine 110, and asparagine 134. Cystine bridges form between cysteine 53/cysteine 96 and cysteine 57/cysteine 100. In terms of domain architecture, Ig-like C2-type 2 spans 132–197; that stretch reads GQNFTLRCQV…FSCRTELDMQ (66 aa). Residues cysteine 139 and cysteine 190 are joined by a disulfide bond. Asparagine 206, asparagine 264, asparagine 295, asparagine 308, asparagine 320, asparagine 363, asparagine 389, asparagine 453, and asparagine 457 each carry an N-linked (GlcNAc...) asparagine glycan. Positions 234–301 constitute an Ig-like C2-type 3 domain; that stretch reads ETSWPVDCTL…IVCNVTLGGE (68 aa). A disulfide bridge links cysteine 241 with cysteine 294. The Ig-like C2-type 4 domain occupies 329–382; sequence GSTVTVSCMAGARVQVTLDGVPAAAPGQPAQLQLNATESDDGRSFFCSATLEVD. A disulfide bridge links cysteine 336 with cysteine 375. In terms of domain architecture, Ig-like C2-type 5 spans 416–469; sequence KTRHVLQCQARGNPYPELRCLKEGSSREVPVGIPFFVNVTHNGTYQCQASSSRG. Cysteine 423 and cysteine 462 form a disulfide bridge. A helical transmembrane segment spans residues 486-510; it reads FVPVFVAVLLTLGVVTIVLALMYVF. At 511–547 the chain is on the cytoplasmic side; that stretch reads REHQRSGSYHVREESTYLPLTSMQPTEAMGEEPSRAE.

Belongs to the immunoglobulin superfamily. ICAM family. In terms of assembly, interacts with moesin/MSN. Upon stimulation by a physiologic stimuli becomes rapidly and transiently phosphorylated on serine residues. In terms of processing, N-glycosylated; glycans consist of a mixture of tri- and tetra-antennary complex-type chains and high-mannose chains. As to expression, leukocytes.

The protein resides in the membrane. In terms of biological role, ICAM proteins are ligands for the leukocyte adhesion protein LFA-1 (integrin alpha-L/beta-2). ICAM3 is also a ligand for integrin alpha-D/beta-2. In association with integrin alpha-L/beta-2, contributes to apoptotic neutrophil phagocytosis by macrophages. In Homo sapiens (Human), this protein is Intercellular adhesion molecule 3 (ICAM3).